The chain runs to 111 residues: Large ribosomal subunit protein uL22 (111 aa).

This sequence belongs to the universal ribosomal protein uL22 family. As to quaternary structure, part of the 50S ribosomal subunit.

In terms of biological role, this protein binds specifically to 23S rRNA; its binding is stimulated by other ribosomal proteins, e.g. L4, L17, and L20. It is important during the early stages of 50S assembly. It makes multiple contacts with different domains of the 23S rRNA in the assembled 50S subunit and ribosome. The globular domain of the protein is located near the polypeptide exit tunnel on the outside of the subunit, while an extended beta-hairpin is found that lines the wall of the exit tunnel in the center of the 70S ribosome. This is Large ribosomal subunit protein uL22 from Chlamydia trachomatis serovar L2 (strain ATCC VR-902B / DSM 19102 / 434/Bu).